The chain runs to 227 residues: Testis-expressed protein 30 (227 aa).

The polypeptide is Testis-expressed protein 30 (TEX30) (Homo sapiens (Human)).